A 328-amino-acid polypeptide reads, in one-letter code: GMP reductase (328 aa).

Residue C176 is the Thioimidate intermediate of the active site. 205–228 (IIADGGIRTHGDIAKSIRFGASMI) is an NADP(+) binding site.

It belongs to the IMPDH/GMPR family. GuaC type 2 subfamily.

It carries out the reaction IMP + NH4(+) + NADP(+) = GMP + NADPH + 2 H(+). Functionally, catalyzes the irreversible NADPH-dependent deamination of GMP to IMP. It functions in the conversion of nucleobase, nucleoside and nucleotide derivatives of G to A nucleotides, and in maintaining the intracellular balance of A and G nucleotides. The protein is GMP reductase of Streptococcus pneumoniae (strain JJA).